Consider the following 259-residue polypeptide: Ribonuclease PH (259 aa).

Phosphate is bound by residues R88 and 126–128 (GTR).

This sequence belongs to the RNase PH family. In terms of assembly, homohexameric ring arranged as a trimer of dimers.

It catalyses the reaction tRNA(n+1) + phosphate = tRNA(n) + a ribonucleoside 5'-diphosphate. In terms of biological role, phosphorolytic 3'-5' exoribonuclease that plays an important role in tRNA 3'-end maturation. Removes nucleotide residues following the 3'-CCA terminus of tRNAs; can also add nucleotides to the ends of RNA molecules by using nucleoside diphosphates as substrates, but this may not be physiologically important. Probably plays a role in initiation of 16S rRNA degradation (leading to ribosome degradation) during starvation. The polypeptide is Ribonuclease PH (Mycobacterium bovis (strain ATCC BAA-935 / AF2122/97)).